The chain runs to 469 residues: UDP-N-acetylmuramate--L-alanine ligase (469 aa).

An ATP-binding site is contributed by 113–119; sequence GTHGKTT.

This sequence belongs to the MurCDEF family.

It localises to the cytoplasm. The enzyme catalyses UDP-N-acetyl-alpha-D-muramate + L-alanine + ATP = UDP-N-acetyl-alpha-D-muramoyl-L-alanine + ADP + phosphate + H(+). Its pathway is cell wall biogenesis; peptidoglycan biosynthesis. Its function is as follows. Cell wall formation. This is UDP-N-acetylmuramate--L-alanine ligase from Neisseria meningitidis serogroup B (strain ATCC BAA-335 / MC58).